A 380-amino-acid chain; its full sequence is Homeobox protein ceh-6 (380 aa).

Over residues 1-25 the composition is skewed to low complexity; the sequence is MLIPSSSSIPSSLSASASDSEPSSL. Disordered stretches follow at residues 1 to 31, 167 to 190, and 265 to 286; these read MLIP…SGIS, SGSV…SEQT, and GSPN…KKRT. The POU-specific domain occupies 187–261; it reads SEQTCPDDLE…LLFKWLEEAD (75 aa). A DNA-binding region (homeobox) is located at residues 281 to 340; sequence KRKKRTSIEVNVKSRLEFHFQSNQKPNAQEITQVAMELQLEKEVVRVWFCNRRQKEKRIA.

This sequence belongs to the POU transcription factor family. Class-3 subfamily. In terms of assembly, interacts with egl-27, sox-2 and sem-4. Interacts with wdr-5.1. As to expression, expressed in a series of neurons in the ring ganglia, excretory cell, dividing neuroblasts in the ventral cord and rectal cells.

The protein resides in the nucleus. Functionally, vital for embryonic development and essential for the proper function of the excretory cell. Required for the transdifferentiation of the Y rectal epithelial cell to the PDA motor neuron during larval development. This Caenorhabditis elegans protein is Homeobox protein ceh-6.